The primary structure comprises 420 residues: O-methyltransferase penK (420 aa).

Asp-285 serves as a coordination point for S-adenosyl-L-methionine. The active-site Proton acceptor is His-325.

It belongs to the class I-like SAM-binding methyltransferase superfamily. Cation-independent O-methyltransferase family.

It participates in secondary metabolite biosynthesis. The protein operates within alkaloid biosynthesis. It functions in the pathway mycotoxin biosynthesis. Its function is as follows. O-methyltransferase; part of the gene cluster that mediates the biosynthesis of penigequinolones, potent insecticidal alkaloids that contain a highly modified 10-carbon prenyl group. The first stage is catalyzed by the nonribosomal peptide synthetase penN that condenses anthranilic acid and O-methyl-L-tyrosine to produce 4'-methoxycyclopeptin. 4'-methoxycyclopeptin is then converted to 4'-methoxydehydrocyclopeptin by the ketoglutarate-dependent dioxygenase penM through dehydrogenation to form a double bond between C-alpha and C-beta of the O-methyltyrosine side chain. PenM also converts its first product methoxydehydrocyclopeptin to 4'-methoxycyclopenin. The following conversion of 4'methoxycyclopenin into 4'-methoxyviridicatin is catalyzed by the cyclopenase penL. 4'-methoxyviridicatin is the precursor of quinolone natural products, and is further converted to quinolinone B. The prenyltransferase penI then catalyzes the canonical Friedel-Crafts alkylation of quinolinone B with dimethylallyl cation to yield dimethylallyl quinolone, which is subjected to FAD-dependent dehydrogenation by the FAD-linked oxidoreductase penH to yield conjugated aryl diene. The delta(3') double bond then serves as the site of the second alkylation with DMAPP catalyzed by the prenyltransferase penG to yield a carbenium ion intermediate, which can be attacked by H(2)O to yield a styrenyl quinolone containing a C3'-hydroxyprenyl chain, or undergo cyclization to yield yaequinolones J1 and J2. The conversion of the styrenyl quinolone into the tetrahydrofuran-containing yaequinolone C is performed by the FAD-dependent monooxygenase penE and involves epoxidation of the terminal C7'-C8' olefin, followed by epoxide ring opening initiated by the C3' hydroxyl group. The predicted cysteine hydrolase penJ acts as an epoxide hydrolase that enhances the rate of the 5-exo-tet cyclization step, increasing the yield of yaequinolone C. PenF catalyzes the cationic rearrangement of the epoxide formed by penE (before ring opening to produce yaequinolone C) into yaequinolone D. Finally, the short-chain dehydrogenase/reductase (SDR)-like reductase penD, catalyzes both the dehydration of yaequinolone D and the reduction of the resulting oxonium to yield penigequinolone. In Penicillium thymicola, this protein is O-methyltransferase penK.